Reading from the N-terminus, the 864-residue chain is Protein translocase subunit SecA (864 aa).

ATP-binding positions include Q87, 105-109 (GEGKT), and D512.

It belongs to the SecA family. As to quaternary structure, monomer and homodimer. Part of the essential Sec protein translocation apparatus which comprises SecA, SecYEG and auxiliary proteins SecDF-YajC and YidC.

It is found in the cell inner membrane. The protein resides in the cytoplasm. It catalyses the reaction ATP + H2O + cellular proteinSide 1 = ADP + phosphate + cellular proteinSide 2.. Its function is as follows. Part of the Sec protein translocase complex. Interacts with the SecYEG preprotein conducting channel. Has a central role in coupling the hydrolysis of ATP to the transfer of proteins into and across the cell membrane, serving as an ATP-driven molecular motor driving the stepwise translocation of polypeptide chains across the membrane. The chain is Protein translocase subunit SecA from Buchnera aphidicola subsp. Cinara cedri (strain Cc).